A 301-amino-acid polypeptide reads, in one-letter code: 2-aminobenzoylacetyl-CoA thioesterase (301 aa).

His69, His71, Asp73, His74, His159, Asp178, and His221 together coordinate Fe cation.

The protein belongs to the metallo-beta-lactamase superfamily.

The catalysed reaction is (2-aminobenzoyl)acetyl-CoA + H2O = (2-aminobenzoyl)acetate + CoA + H(+). With respect to regulation, thioesterase activity, but not pyocyanine production, is inhibited by 2-(pyridin-3-yl)benzoic acid, 2-(1H-pyrrol-1-yl)benzoic acid and 3-methylthiophene-2-carboxylic acid. Compounds bind to the active center. In terms of biological role, required for the biosynthesis of the quorum-sensing signaling molecules 2-heptyl-4(1H)-quinolone (HHQ) and 2-heptyl-3-hydroxy-4(1H)-quinolone (Pseudomonas quinolone signal or PQS), which are important for biofilm formation and virulence. Catalyzes the hydrolysis of the intermediate 2-aminobenzoylacetyl-CoA (2-ABA-CoA) to form 2-aminobenzoylacetate (2-ABA), the precursor of HHQ. In vitro, can also hydrolyze other substrates such as S-ethyl-acetothioacetate and acetoacetyl-CoA, but is inactive against anthraniloyl-CoA, malonyl-CoA and octanoyl-CoA. Beyond its thioesterase function, is involved in the regulation of diverse genes coding for key virulence determinants and biofilm development. The chain is 2-aminobenzoylacetyl-CoA thioesterase from Pseudomonas aeruginosa (strain ATCC 15692 / DSM 22644 / CIP 104116 / JCM 14847 / LMG 12228 / 1C / PRS 101 / PAO1).